A 677-amino-acid chain; its full sequence is Threonine--tRNA ligase (677 aa).

Positions 1–59 (MAQATISITVNGEAKEVEATTTGVELFAEDKNIIAVKINGENRDLYTPLNDGDTVDPIA) constitute a TGS domain. Residues 255–561 (DHRKLGAEMD…LLEHYAGAFP (307 aa)) are catalytic. Zn(2+)-binding residues include cysteine 360, histidine 411, and histidine 538.

The protein belongs to the class-II aminoacyl-tRNA synthetase family. As to quaternary structure, homodimer. It depends on Zn(2+) as a cofactor.

Its subcellular location is the cytoplasm. It carries out the reaction tRNA(Thr) + L-threonine + ATP = L-threonyl-tRNA(Thr) + AMP + diphosphate + H(+). Catalyzes the attachment of threonine to tRNA(Thr) in a two-step reaction: L-threonine is first activated by ATP to form Thr-AMP and then transferred to the acceptor end of tRNA(Thr). Also edits incorrectly charged L-seryl-tRNA(Thr). The sequence is that of Threonine--tRNA ligase from Bifidobacterium longum (strain NCC 2705).